Reading from the N-terminus, the 460-residue chain is Kynurenine 3-monooxygenase (460 aa).

It belongs to the aromatic-ring hydroxylase family. KMO subfamily. FAD is required as a cofactor.

The protein resides in the mitochondrion. It catalyses the reaction L-kynurenine + NADPH + O2 + H(+) = 3-hydroxy-L-kynurenine + NADP(+) + H2O. It functions in the pathway cofactor biosynthesis; NAD(+) biosynthesis; quinolinate from L-kynurenine: step 1/3. Catalyzes the hydroxylation of L-kynurenine (L-Kyn) to form 3-hydroxy-L-kynurenine (L-3OHKyn). Required for synthesis of quinolinic acid. In Dictyostelium discoideum (Social amoeba), this protein is Kynurenine 3-monooxygenase.